The primary structure comprises 267 residues: Probable membrane transporter protein MJ0441 (267 aa).

The next 7 helical transmembrane spans lie at 10–30, 31–51, 55–75, 87–107, 158–178, 185–205, and 213–233; these read LLLL…GSLF, GIGG…YFGI, VKFA…ISIF, ASIT…FLVV, FLSG…LAMA, AVAI…ISYL, and IYNI…PIIY.

It belongs to the 4-toluene sulfonate uptake permease (TSUP) (TC 2.A.102) family.

It is found in the cell membrane. This Methanocaldococcus jannaschii (strain ATCC 43067 / DSM 2661 / JAL-1 / JCM 10045 / NBRC 100440) (Methanococcus jannaschii) protein is Probable membrane transporter protein MJ0441.